We begin with the raw amino-acid sequence, 173 residues long: Large ribosomal subunit protein uL10 (173 aa).

Belongs to the universal ribosomal protein uL10 family. In terms of assembly, part of the ribosomal stalk of the 50S ribosomal subunit. The N-terminus interacts with L11 and the large rRNA to form the base of the stalk. The C-terminus forms an elongated spine to which L12 dimers bind in a sequential fashion forming a multimeric L10(L12)X complex.

Its function is as follows. Forms part of the ribosomal stalk, playing a central role in the interaction of the ribosome with GTP-bound translation factors. This Synechocystis sp. (strain ATCC 27184 / PCC 6803 / Kazusa) protein is Large ribosomal subunit protein uL10 (rplJ).